The primary structure comprises 81 residues: Defensin-like protein b (81 aa).

Residues 1–26 form the signal peptide; that stretch reads MRNATFFIVFYVFISLVLSNVQDVTA. 4 cysteine pairs are disulfide-bonded: C31-C81, C42-C66, C50-C76, and C64-C78.

Belongs to the DEFL family. As to expression, expressed in microspores and in young and mature anthers.

The protein localises to the secreted. Involved in self-incompatibility. The chain is Defensin-like protein b (SCRb-1) from Arabidopsis lyrata (Lyre-leaved rock-cress).